The primary structure comprises 139 residues: Proline-rich nuclear receptor coactivator 2 (139 aa).

Disordered stretches follow at residues 1-51, 61-80, and 89-110; these read MGGG…GYNS, NGGK…SLSG, and ANQN…LPKP. 2 stretches are compositionally biased toward polar residues: residues 11–36 and 61–79; these read APQS…NSQM and NGGK…SSLS. The SH3-binding motif lies at 99-105; the sequence is SEPPSPS. Residues 101–110 are compositionally biased toward pro residues; sequence PPSPSVLPKP.

It belongs to the PNRC family. PNRC2 subfamily. In terms of assembly, interacts with UPF1/RENT1; preferentially interacts with hyperphosphorylated form. Interacts with DCP1A. Interacts with many nuclear receptors including ESR1, ESRRA, ESRRG, NR3C1/GR, NR5A1, PGR, TR, RAR and RXR. In terms of tissue distribution, expressed in heart, lung, muscle and brain.

The protein localises to the nucleus. Its subcellular location is the cytoplasm. It is found in the P-body. In terms of biological role, involved in nonsense-mediated mRNA decay (NMD) by acting as a bridge between the mRNA decapping complex and the NMD machinery. May act by targeting the NMD machinery to the P-body and recruiting the decapping machinery to aberrant mRNAs. Required for UPF1/RENT1 localization to the P-body. Plays a role in glucocorticoid receptor-mediated mRNA degradation by interacting with the glucocorticoid receptor NR3C1 in a ligand-dependent manner when it is bound to the 5' UTR of target mRNAs and recruiting the RNA helicase UPF1 and the mRNA-decapping enzyme DCP1A, leading to RNA decay. Also acts as a nuclear receptor coactivator. May play a role in controlling the energy balance between energy storage and energy expenditure. The protein is Proline-rich nuclear receptor coactivator 2 (PNRC2) of Homo sapiens (Human).